The sequence spans 366 residues: Dual-specificity RNA methyltransferase RlmN (366 aa).

E102 serves as the catalytic Proton acceptor. A Radical SAM core domain is found at 108-340; it reads DEGRNTLCVS…TTTRKTRGRD (233 aa). A disulfide bridge connects residues C115 and C345. C122, C126, and C129 together coordinate [4Fe-4S] cluster. S-adenosyl-L-methionine contacts are provided by residues 171-172, S203, 225-227, and N302; these read GE and SLH. C345 (S-methylcysteine intermediate) is an active-site residue.

The protein belongs to the radical SAM superfamily. RlmN family. [4Fe-4S] cluster serves as cofactor.

It is found in the cytoplasm. The catalysed reaction is adenosine(2503) in 23S rRNA + 2 reduced [2Fe-2S]-[ferredoxin] + 2 S-adenosyl-L-methionine = 2-methyladenosine(2503) in 23S rRNA + 5'-deoxyadenosine + L-methionine + 2 oxidized [2Fe-2S]-[ferredoxin] + S-adenosyl-L-homocysteine. The enzyme catalyses adenosine(37) in tRNA + 2 reduced [2Fe-2S]-[ferredoxin] + 2 S-adenosyl-L-methionine = 2-methyladenosine(37) in tRNA + 5'-deoxyadenosine + L-methionine + 2 oxidized [2Fe-2S]-[ferredoxin] + S-adenosyl-L-homocysteine. Functionally, specifically methylates position 2 of adenine 2503 in 23S rRNA and position 2 of adenine 37 in tRNAs. m2A2503 modification seems to play a crucial role in the proofreading step occurring at the peptidyl transferase center and thus would serve to optimize ribosomal fidelity. The polypeptide is Dual-specificity RNA methyltransferase RlmN (Methylococcus capsulatus (strain ATCC 33009 / NCIMB 11132 / Bath)).